The chain runs to 338 residues: Aspartate carbamoyltransferase catalytic subunit (338 aa).

Carbamoyl phosphate contacts are provided by Arg72 and Thr73. Lys100 provides a ligand contact to L-aspartate. Carbamoyl phosphate-binding residues include Arg122, His152, and Gln155. Residues Arg186 and Arg243 each coordinate L-aspartate. Gly284 and Pro285 together coordinate carbamoyl phosphate.

It belongs to the aspartate/ornithine carbamoyltransferase superfamily. ATCase family. Heterododecamer (2C3:3R2) of six catalytic PyrB chains organized as two trimers (C3), and six regulatory PyrI chains organized as three dimers (R2).

It carries out the reaction carbamoyl phosphate + L-aspartate = N-carbamoyl-L-aspartate + phosphate + H(+). It participates in pyrimidine metabolism; UMP biosynthesis via de novo pathway; (S)-dihydroorotate from bicarbonate: step 2/3. Functionally, catalyzes the condensation of carbamoyl phosphate and aspartate to form carbamoyl aspartate and inorganic phosphate, the committed step in the de novo pyrimidine nucleotide biosynthesis pathway. This chain is Aspartate carbamoyltransferase catalytic subunit, found in Acinetobacter baylyi (strain ATCC 33305 / BD413 / ADP1).